The following is a 443-amino-acid chain: Sperm-associated antigen 4 protein (443 aa).

A compositionally biased stretch (low complexity) spans 1–36 (MRRSPRSGSAASSHNHTPNFYSENSNSSHSATSGDS). Positions 1-107 (MRRSPRSGSA…VRGGASEPSG (107 aa)) are disordered. The next 2 helical transmembrane spans lie at 137–157 (FLSLLFQVLSMVLSLAVDGLV) and 168–188 (FLFTAVSLLSIFLAALWWGLL). Positions 203–244 (TLSQYHHRVHSQGQQLQQLQAELNKLHKEVSSVRAAHSERVA) form a coiled coil. The region spanning 267-427 (GASIDLEKTS…YRVRAHGVRT (161 aa)) is the SUN domain.

Self-associates. Interacts with ODF1. May associate with microtubules. Interacts with SUN3 and SYNE1; suggesting the formation of a spermatogenesis-specific LINC complex; a SUN domain-based heterotrimer of SPAG4 and SUN3 may associate with SYNE1. Interacts with SEPT12 and LMNB1; during spermatogenesis. In terms of tissue distribution, isoform 1 is testis specific and is exclusively expressed in spermatids.

It localises to the membrane. The protein resides in the cytoplasm. It is found in the cytoskeleton. The protein localises to the nucleus envelope. Its subcellular location is the nucleus inner membrane. It localises to the flagellum axoneme. Its function is as follows. Involved in spermatogenesis. Required for sperm head formation but not required to establish and maintain general polarity of the sperm head. Required for anchoring and organization of the manchette. Required for targeting of SUN3 and probably SYNE1 through a probable SUN1:SYNE3 LINC complex to the nuclear envelope and involved in accurate posterior sperm head localization of the complex. May anchor SUN3 the nuclear envelope. Involved in maintenance of the nuclear envelope integrity. May assist the organization and assembly of outer dense fibers (ODFs), a specific structure of the sperm tail. The sequence is that of Sperm-associated antigen 4 protein (Spag4) from Mus musculus (Mouse).